The following is a 454-amino-acid chain: Epsin-1 (454 aa).

One can recognise an ENTH domain in the interval 11-143; it reads NLVKGYSSTQ…SDDERLNEER (133 aa). 2 disordered regions span residues 142–195 and 292–350; these read ERNM…EDYE and YLAS…GNQS. A compositionally biased stretch (basic residues) spans 149–160; sequence GRNRKGRRRRGT. Thr-160 carries the phosphothreonine modification. Ser-163 is modified (phosphoserine). 2 UIM domains span residues 165–184 and 189–208; these read ENDD…AEED and KQDE…EELK. The residue at position 180 (Thr-180) is a Phosphothreonine. Positions 180 to 191 are enriched in basic and acidic residues; that stretch reads TAEEDERRRKQD. The segment covering 292–302 has biased composition (low complexity); it reads YLASMQQQQQA. 2 stretches are compositionally biased toward polar residues: residues 303–329 and 340–350; these read MSNN…ASSP and PLIQNRTGNQS. Ser-328 is modified (phosphoserine). Residue Lys-357 forms a Glycyl lysine isopeptide (Lys-Gly) (interchain with G-Cter in ubiquitin) linkage. Phosphothreonine is present on residues Thr-364, Thr-366, Thr-384, Thr-386, and Thr-388. Positions 384–398 are enriched in polar residues; that stretch reads TKTGTFINSQGTGYR. Positions 384–405 are disordered; that stretch reads TKTGTFINSQGTGYRQVSDDPN. Phosphothreonine; by PRK1 is present on residues Thr-395 and Thr-415. A compositionally biased stretch (polar residues) spans 418 to 428; it reads PSTSVVPTQTG. Residues 418–454 form a disordered region; that stretch reads PSTSVVPTQTGYGFGNQSQQQSQNNGSNNRGYTLIDL. Over residues 432–446 the composition is skewed to low complexity; sequence GNQSQQQSQNNGSNN. A clathrin-binding region spans residues 447–454; the sequence is RGYTLIDL.

Belongs to the epsin family. Interacts with EDE1 and PAN1.

It is found in the cytoplasm. Its subcellular location is the membrane. Functionally, binds to membranes enriched in phosphatidylinositol 3,5-bisphosphate (PtdIns(3,5)P2) and phosphatidylinositol 4,5-bisphosphate (PtdIns(4,5)P2). Required for endocytosis and localization of actin. Negatively regulated via phosphorylation. This Saccharomyces cerevisiae (strain ATCC 204508 / S288c) (Baker's yeast) protein is Epsin-1 (ENT1).